Here is a 168-residue protein sequence, read N- to C-terminus: Monothiol glutaredoxin-S7, chloroplastic (168 aa).

The transit peptide at 1–54 directs the protein to the chloroplast; the sequence is MAATAAASVAAISPLPGASLPRPVSARVPLLPRASPPTWRLSVGSARARSTRCL. Residues 67 to 168 form the Glutaredoxin domain; the sequence is RATLDKVVGS…QETLEKAMLS (102 aa). K84 serves as a coordination point for glutathione. Residue C92 coordinates [2Fe-2S] cluster. Glutathione contacts are provided by residues R121, F133, and 146 to 147; that span reads CD.

It belongs to the glutaredoxin family. CGFS subfamily.

It localises to the plastid. It is found in the chloroplast. Functionally, may only reduce GSH-thiol disulfides, but not protein disulfides. The polypeptide is Monothiol glutaredoxin-S7, chloroplastic (GRXS7) (Oryza sativa subsp. japonica (Rice)).